Here is a 256-residue protein sequence, read N- to C-terminus: N-acetyl-D-glucosamine kinase (256 aa).

ATP is bound by residues 4 to 11 and 133 to 140; these read GFDMGGTK and GVGGGLIV. Zn(2+) contacts are provided by His-157, Cys-177, Cys-179, and Cys-184.

Belongs to the ROK (NagC/XylR) family. NagK subfamily.

The catalysed reaction is N-acetyl-D-glucosamine + ATP = N-acetyl-D-glucosamine 6-phosphate + ADP + H(+). The protein operates within cell wall biogenesis; peptidoglycan recycling. In terms of biological role, catalyzes the phosphorylation of N-acetyl-D-glucosamine (GlcNAc) derived from cell-wall degradation, yielding GlcNAc-6-P. In Yersinia pestis bv. Antiqua (strain Nepal516), this protein is N-acetyl-D-glucosamine kinase (nagK).